The chain runs to 412 residues: 43 kDa receptor-associated protein of the synapse (412 aa).

Glycine 2 carries N-myristoyl glycine lipidation. 7 TPR repeats span residues 6–39 (TKQQIEKGLQLYQANETGKALEIWQQVVERSTEL), 83–116 (TEAYLNLARGHEKLCEFSEAVAYCRTCLGAEGGP), 123–156 (GQVCLSMGNAFLGLSAFQKALECFEKALRYAHGN), 163–196 (CRVCCSLGAFYVQLKDYEKALFFPCKSAELVADY), 206–239 (AMSRYHMAAAYRKLGRMDDAMECCEESMKIALQH), 246–279 (ALCLLCFADIHRHRSDIGKALPRYESSLNIMTEI), and 286–319 (AHVLLNIAKCWMTEKKLDKTLGVVQKAEELADAV). At tyrosine 196 the chain carries Phosphotyrosine. Residues 363 to 403 (CGLCGESIGDQNSQLQALPCSHLFHLKCLQTNGNRGCPNCK) form an RING-type zinc finger. Phosphoserine is present on serine 405.

The protein belongs to the RAPsyn family.

Its subcellular location is the cell membrane. The protein localises to the postsynaptic cell membrane. It localises to the cytoplasm. It is found in the cytoskeleton. Its function is as follows. Postsynaptic protein required for clustering of nicotinic acetylcholine receptors (nAChRs) at the neuromuscular junction. It may link the receptor to the underlying postsynaptic cytoskeleton, possibly by direct association with actin or spectrin. The sequence is that of 43 kDa receptor-associated protein of the synapse (RAPSN) from Tetronarce californica (Pacific electric ray).